A 1488-amino-acid chain; its full sequence is Eukaryotic translation initiation factor 4G (1488 aa).

Disordered stretches follow at residues 196–320 (VQHR…GQTS), 337–367 (DSEK…GKSE), and 415–707 (THQI…MTEA). Basic and acidic residues-rich tracts occupy residues 216-244 (VSEK…EKHP) and 274-299 (ADEK…RNDT). Composition is skewed to polar residues over residues 300 to 310 (KNLPQQPQSAS), 345 to 360 (SKVS…SSIS), 448 to 464 (SLAT…SFVT), and 473 to 495 (CTTS…TQTL). Residues 496–520 (SASVDASDVSEVNSGTSSESTSQST) are compositionally biased toward low complexity. Basic and acidic residues predominate over residues 555–566 (QVKHADGAKDES). Residues 627-646 (QEQSESVATSDGADSSSTVD) show a composition bias toward polar residues. The span at 651–671 (LPEESEREVMCEDDGKKKVEP) shows a compositional bias: basic and acidic residues. A compositionally biased stretch (polar residues) spans 683-696 (PKLQSSDSGNQASA). An EIF4E-binding region spans residues 709–721 (GRKKYSRDFLLTF). Basic and acidic residues predominate over residues 753 to 784 (DREPHPSSARGSDRPTSRGDRRGPAMDDDKWL). 3 disordered regions span residues 753–795 (DREP…PNRD), 974–1000 (RGER…EREE), and 1107–1299 (WQQR…SEEE). In terms of domain architecture, MIF4G spans 883-1106 (QRQLKAILNK…RDSIDLRKNK (224 aa)). Residues 978–989 (EEAEADKTEEEG) show a composition bias toward acidic residues. Composition is skewed to basic and acidic residues over residues 990–1000 (EIKQTKEEREE), 1111–1132 (RKVD…ERHA), 1181–1191 (IRYEQERHQFD), and 1254–1267 (TRED…DRFS). Residues 1273–1294 (AAQSASSSHRPASQEGRSGNKS) are compositionally biased toward polar residues. Residues 1299-1423 (ELREKSIATI…VLQDVGKLIE (125 aa)) form the MI domain.

This sequence belongs to the eukaryotic initiation factor 4G family. As to quaternary structure, EIF4F is a multi-subunit complex, the composition of which varies with external and internal environmental conditions. It is composed of at least EIF4A, EIF4E and EIF4G. In higher plants two isoforms of EIF4F have been identified, named isoform EIF4F and isoform EIF(iso)4F. Isoform EIF4F has subunits p220 and p26, whereas isoform EIF(iso)4F has subunits p82 and p28.

Its function is as follows. Component of the protein complex eIF4F, which is involved in the recognition of the mRNA cap, ATP-dependent unwinding of 5'-terminal secondary structure and recruitment of mRNA to the ribosome. This chain is Eukaryotic translation initiation factor 4G, found in Triticum aestivum (Wheat).